A 208-amino-acid chain; its full sequence is Outer-membrane lipoprotein LolB (208 aa).

Positions 1 to 21 are cleaved as a signal peptide; sequence MLSSKRRLMRLLPLASLLLTA. Cysteine 22 is lipidated: N-palmitoyl cysteine. Cysteine 22 carries S-diacylglycerol cysteine lipidation.

This sequence belongs to the LolB family. As to quaternary structure, monomer.

It is found in the cell outer membrane. In terms of biological role, plays a critical role in the incorporation of lipoproteins in the outer membrane after they are released by the LolA protein. This chain is Outer-membrane lipoprotein LolB, found in Erwinia tasmaniensis (strain DSM 17950 / CFBP 7177 / CIP 109463 / NCPPB 4357 / Et1/99).